A 625-amino-acid polypeptide reads, in one-letter code: ATP-dependent RNA helicase DBP9 (625 aa).

The interval 1–21 (MKRKLDANNVPSPEDSAGKSI) is disordered. Residues 24-52 (HSFETLKLDPRLLQALTQQKFTKPTPIQA) carry the Q motif motif. The Helicase ATP-binding domain occupies 55–233 (IPLALDGKDV…GLFCRNPVVL (179 aa)). 68–75 (AKTGSGKT) serves as a coordination point for ATP. The DEAD box motif lies at 181-184 (DEAD). In terms of domain architecture, Helicase C-terminal spans 260 to 485 (LLTYVIFKLQ…EVKPYHFDMK (226 aa)). Disordered regions lie at residues 339–393 (RKNS…EKDY) and 590–625 (IRKA…GGKH). Positions 347–357 (RKSDQCSRDSE) are enriched in basic and acidic residues. Over residues 361 to 370 (AQTSRNNDQY) the composition is skewed to polar residues. The span at 599–610 (GRGRGGKAGRGG) shows a compositional bias: basic residues.

The protein belongs to the DEAD box helicase family. DDX56/DBP9 subfamily.

The protein localises to the nucleus. The protein resides in the nucleolus. It carries out the reaction ATP + H2O = ADP + phosphate + H(+). Functionally, ATP-binding RNA helicase involved in the biogenesis of 60S ribosomal subunits and is required for the normal formation of 25S and 5.8S rRNAs. This chain is ATP-dependent RNA helicase DBP9 (DBP9), found in Ajellomyces capsulatus (strain NAm1 / WU24) (Darling's disease fungus).